An 833-amino-acid chain; its full sequence is A disintegrin and metalloproteinase with thrombospondin motifs 4 (833 aa).

The first 49 residues, 1–49 (MSQMGLHPRRGLTGHWLQRFQPCLPLHTVQWRRLLLLAFLLSLAWPASP), serve as a signal peptide directing secretion. Residues 50–208 (LPREEEIVFP…PSPISRRTKR (159 aa)) constitute a propeptide that is removed on maturation. N63 carries N-linked (GlcNAc...) asparagine glycosylation. A disordered region spans residues 180 to 204 (KSPASSQGPMCTVKAPSGSPSPISR). The Cysteine switch motif lies at 188 to 195 (PMCTVKAP). C190 contacts Zn(2+). The Peptidase M12B domain occupies 214–424 (RFVETLVVAD…GYGHCLLDKP (211 aa)). Cystine bridges form between C289–C341, C318–C323, C335–C419, C373–C403, C445–C468, C456–C478, C463–C497, C491–C502, C528–C565, C532–C570, and C543–C555. N299 carries N-linked (GlcNAc...) asparagine glycosylation. Position 357 (H357) interacts with Zn(2+). The active site involves E358. H361 and H367 together coordinate Zn(2+). The Disintegrin domain occupies 433–515 (TFPGKDYDAD…DQLKDFNVPQ (83 aa)). Positions 516 to 571 (AGGWGPWGPWGDCSRTCGGGVQFSSRDCTRPVPRNGGKYCEGRRTRFRSCNTENCP) constitute a TSP type-1 domain. Positions 682-833 (SKQSGSFKKF…LRKRPWAGRK (152 aa)) are spacer.

In terms of assembly, interacts with SRPX2. Requires Zn(2+) as cofactor. In terms of processing, the precursor is cleaved by a furin endopeptidase. Glycosylated. Can be O-fucosylated by POFUT2 on a serine or a threonine residue found within the consensus sequence C1-X(2)-(S/T)-C2-G of the TSP type-1 repeat domains where C1 and C2 are the first and second cysteine residue of the repeat, respectively. Fucosylated repeats can then be further glycosylated by the addition of a beta-1,3-glucose residue by the glucosyltransferase, B3GALTL. Fucosylation mediates the efficient secretion of ADAMTS family members. Can also be C-glycosylated with one or two mannose molecules on tryptophan residues within the consensus sequence W-X-X-W of the TPRs, and N-glycosylated. These other glycosylations can also facilitate secretion.

The protein localises to the secreted. It is found in the extracellular space. The protein resides in the extracellular matrix. It catalyses the reaction Glutamyl endopeptidase. Bonds cleaved include 370-Thr-Glu-Gly-Glu-|-Ala-Arg-Gly-Ser-377 in the interglobular domain of mammalian aggrecan.. Functionally, cleaves aggrecan, a cartilage proteoglycan, at the '392-Glu-|-Ala-393' site and may be involved in its turnover. Also cleaves COMP. May play an important role in the destruction of aggrecan in arthritic diseases. This is A disintegrin and metalloproteinase with thrombospondin motifs 4 (Adamts4) from Mus musculus (Mouse).